We begin with the raw amino-acid sequence, 229 residues long: NAD-dependent protein deacetylase (229 aa).

The Deacetylase sirtuin-type domain maps to 1 to 229 (MNNLKEAIKQ…NDAVKVFAEI (229 aa)). The NAD(+) site is built by Ala-20, Arg-32, Gln-96, Ile-98, Asp-99, His-114, Thr-181, Ser-182, Asn-205, and Val-223. Nicotinamide is bound by residues Ile-98 and Asp-99. His-114 (proton acceptor) is an active-site residue.

It belongs to the sirtuin family. Class U subfamily.

Its subcellular location is the cytoplasm. The enzyme catalyses N(6)-acetyl-L-lysyl-[protein] + NAD(+) + H2O = 2''-O-acetyl-ADP-D-ribose + nicotinamide + L-lysyl-[protein]. Its function is as follows. NAD-dependent protein deacetylase which modulates the activities of several enzymes which are inactive in their acetylated form. This chain is NAD-dependent protein deacetylase, found in Listeria innocua serovar 6a (strain ATCC BAA-680 / CLIP 11262).